Here is a 208-residue protein sequence, read N- to C-terminus: Riboflavin synthase (208 aa).

Lumazine-binding repeat units lie at residues 1–97 (MFTG…MGGH) and 98–195 (FVQG…EKLV). Residues 4-6 (GLV), 48-50 (CLT), 62-67 (GIAPES), 101-103 (GHV), K137, 146-148 (SLT), and 160-165 (MMISYT) each bind 2,4-dihydroxypteridine.

In terms of assembly, homotrimer.

It carries out the reaction 2 6,7-dimethyl-8-(1-D-ribityl)lumazine + H(+) = 5-amino-6-(D-ribitylamino)uracil + riboflavin. Its pathway is cofactor biosynthesis; riboflavin biosynthesis; riboflavin from 2-hydroxy-3-oxobutyl phosphate and 5-amino-6-(D-ribitylamino)uracil: step 2/2. Catalyzes the dismutation of two molecules of 6,7-dimethyl-8-ribityllumazine, resulting in the formation of riboflavin and 5-amino-6-(D-ribitylamino)uracil. The protein is Riboflavin synthase (rib5) of Schizosaccharomyces pombe (strain 972 / ATCC 24843) (Fission yeast).